We begin with the raw amino-acid sequence, 298 residues long: Possible hemolysin C (298 aa).

CBS domains follow at residues Met-80–Cys-141 and Leu-145–Glu-202.

It belongs to the UPF0053 family. Hemolysin C subfamily.

The sequence is that of Possible hemolysin C (tlyC) from Rickettsia canadensis (strain McKiel).